The chain runs to 211 residues: Thiamine-phosphate synthase (211 aa).

4-amino-2-methyl-5-(diphosphooxymethyl)pyrimidine-binding positions include 37-41 and Asn-69; that span reads QYRDK. Mg(2+) contacts are provided by Asp-70 and Asp-89. A 4-amino-2-methyl-5-(diphosphooxymethyl)pyrimidine-binding site is contributed by Ser-108. 135 to 137 lines the 2-[(2R,5Z)-2-carboxy-4-methylthiazol-5(2H)-ylidene]ethyl phosphate pocket; it reads SPT. Lys-138 contributes to the 4-amino-2-methyl-5-(diphosphooxymethyl)pyrimidine binding site. 2-[(2R,5Z)-2-carboxy-4-methylthiazol-5(2H)-ylidene]ethyl phosphate-binding positions include Gly-165 and 185 to 186; that span reads LS.

Belongs to the thiamine-phosphate synthase family. It depends on Mg(2+) as a cofactor.

It carries out the reaction 2-[(2R,5Z)-2-carboxy-4-methylthiazol-5(2H)-ylidene]ethyl phosphate + 4-amino-2-methyl-5-(diphosphooxymethyl)pyrimidine + 2 H(+) = thiamine phosphate + CO2 + diphosphate. The catalysed reaction is 2-(2-carboxy-4-methylthiazol-5-yl)ethyl phosphate + 4-amino-2-methyl-5-(diphosphooxymethyl)pyrimidine + 2 H(+) = thiamine phosphate + CO2 + diphosphate. The enzyme catalyses 4-methyl-5-(2-phosphooxyethyl)-thiazole + 4-amino-2-methyl-5-(diphosphooxymethyl)pyrimidine + H(+) = thiamine phosphate + diphosphate. It participates in cofactor biosynthesis; thiamine diphosphate biosynthesis; thiamine phosphate from 4-amino-2-methyl-5-diphosphomethylpyrimidine and 4-methyl-5-(2-phosphoethyl)-thiazole: step 1/1. In terms of biological role, condenses 4-methyl-5-(beta-hydroxyethyl)thiazole monophosphate (THZ-P) and 2-methyl-4-amino-5-hydroxymethyl pyrimidine pyrophosphate (HMP-PP) to form thiamine monophosphate (TMP). The polypeptide is Thiamine-phosphate synthase (Thiobacillus denitrificans (strain ATCC 25259 / T1)).